We begin with the raw amino-acid sequence, 97 residues long: Large ribosomal subunit protein bL28 (97 aa).

The protein belongs to the bacterial ribosomal protein bL28 family.

This chain is Large ribosomal subunit protein bL28, found in Rickettsia prowazekii (strain Madrid E).